Consider the following 975-residue polypeptide: Kinesin-like protein KIN-14K (975 aa).

The segment at 1 to 40 (MKNRIKKGSSMIGVYGRSDGSSSIQSSNGSESRESIDDNK) is disordered. The segment covering 17-30 (RSDGSSSIQSSNGS) has biased composition (low complexity). The segment covering 31 to 40 (ESRESIDDNK) has biased composition (basic and acidic residues). One can recognise a Calponin-homology (CH) domain in the interval 40–143 (KQGHQSLVEW…SLKALKASFS (104 aa)). Residues 289-345 (KERSNAELSKLKQELEIVKETHEKQFLELKLNAQKAKVELERQVKNSELRVVEAKEL) are a coiled coil. In terms of domain architecture, Kinesin motor spans 436–746 (NIRVYCRIRP…LKFAERVSGV (311 aa)). 520 to 527 (GQTGSGKT) serves as a coordination point for ATP. A coiled-coil region spans residues 757 to 788 (GRDVRQLMEQVSNLKDMIAKKDEELQKFQNIN). 2 disordered regions span residues 801-852 (VSPP…GAKD) and 900-975 (LFPE…NRKR). Residues 944-958 (LSISTTSSKALTSSK) show a composition bias toward low complexity.

This sequence belongs to the TRAFAC class myosin-kinesin ATPase superfamily. Kinesin family. KIN-14 subfamily.

The protein is Kinesin-like protein KIN-14K of Arabidopsis thaliana (Mouse-ear cress).